A 152-amino-acid chain; its full sequence is Nucleoside diphosphate kinase (152 aa).

ATP-binding residues include Lys11, Phe59, Arg87, Thr93, Arg104, and Asn114. His117 acts as the Pros-phosphohistidine intermediate in catalysis.

The protein belongs to the NDK family. As to quaternary structure, homotetramer. The cofactor is Mg(2+).

The protein localises to the cytoplasm. The catalysed reaction is dZDP + ATP = dZTP + ADP. The enzyme catalyses a 2'-deoxyribonucleoside 5'-diphosphate + ATP = a 2'-deoxyribonucleoside 5'-triphosphate + ADP. It catalyses the reaction a ribonucleoside 5'-diphosphate + ATP = a ribonucleoside 5'-triphosphate + ADP. It functions in the pathway purine metabolism. Its function is as follows. Major role in the synthesis of nucleoside triphosphates other than ATP. The ATP gamma phosphate is transferred to the NDP beta phosphate via a ping-pong mechanism, using a phosphorylated active-site intermediate. Functionally, (Microbial infection) Catalyzes the phosphorylation of dZDP to dZTP, when the bacterium is infected by a phage that produces the substrate for the synthesis of dZTP (2- amino-2'-deoxyadenosine 5'-triphosphate), which is then used by the phage as a DNA polymerase substrate. This Synechococcus sp. (strain CC9311) protein is Nucleoside diphosphate kinase.